Here is a 108-residue protein sequence, read N- to C-terminus: Ig kappa chain V-V region MOPC 149 (108 aa).

Residues 1 to 23 (DIQMTQSPDYLSASVGETVTITC) are framework-1. The cysteines at positions 23 and 88 are disulfide-linked. Residues 24-34 (RASENIYSYLA) form a complementarity-determining-1 region. The framework-2 stretch occupies residues 35-49 (WYQQKQGKSPQLLVY). A complementarity-determining-2 region spans residues 50-56 (DAKTLVE). A framework-3 region spans residues 57-88 (GVPSRFSGSGSGTQFSLKINSLQPEDFGSYYC). Residues 89–97 (QHHYGIPFT) are complementarity-determining-3. The framework-4 stretch occupies residues 98–108 (FGSGTKLEIKR).

The sequence is that of Ig kappa chain V-V region MOPC 149 from Mus musculus (Mouse).